The following is a 328-amino-acid chain: Tetraacyldisaccharide 4'-kinase (328 aa).

An ATP-binding site is contributed by 55-62 (TAGGNGKT).

The protein belongs to the LpxK family.

It carries out the reaction a lipid A disaccharide + ATP = a lipid IVA + ADP + H(+). It participates in glycolipid biosynthesis; lipid IV(A) biosynthesis; lipid IV(A) from (3R)-3-hydroxytetradecanoyl-[acyl-carrier-protein] and UDP-N-acetyl-alpha-D-glucosamine: step 6/6. In terms of biological role, transfers the gamma-phosphate of ATP to the 4'-position of a tetraacyldisaccharide 1-phosphate intermediate (termed DS-1-P) to form tetraacyldisaccharide 1,4'-bis-phosphate (lipid IVA). The protein is Tetraacyldisaccharide 4'-kinase of Escherichia coli O139:H28 (strain E24377A / ETEC).